The chain runs to 125 residues: Morphine 6-dehydrogenase (125 aa).

NADP(+) contacts are provided by residues 9 to 18 (GHSIPVLGFI) and 74 to 111 (SALG…IERE).

The protein belongs to the aldo/keto reductase family. Monomer. The N-terminus is blocked.

The protein resides in the cytoplasm. It carries out the reaction morphine + NAD(+) = morphinone + NADH + H(+). The enzyme catalyses morphine + NADP(+) = morphinone + NADPH + H(+). With respect to regulation, strongly inhibited by sulfhydryl reagents and quercetin, but not by pyrazole, barbital and indomethacine. Catalyzes the dehydrogenation of morphine to morphinone. Uses both NAD and NADP, but the activity is much greater with NAD than with NADP. The sequence is that of Morphine 6-dehydrogenase from Oryctolagus cuniculus (Rabbit).